The primary structure comprises 753 residues: Enhancer of polycomb-like protein 1 (753 aa).

Disordered regions lie at residues 1 to 75 (MAAA…RDLH) and 429 to 490 (VRTE…LPPA). Over residues 46–71 (LDSNELEPSQVHHLNSNASSSSTQQP) the composition is skewed to polar residues. Basic and acidic residues predominate over residues 429 to 449 (VRTEDEEREKKREKKKQDQEL). Positions 450–463 (ALKQQQALQQQQQQ) are enriched in low complexity.

The protein belongs to the enhancer of polycomb family. In terms of assembly, component of the NuA4 histone acetyltransferase complex.

Its subcellular location is the nucleus. In terms of biological role, component of the NuA4 histone acetyltransferase complex which is involved in transcriptional activation of selected genes principally by acetylation of nucleosomal histone H4 and H2A. The NuA4 complex is also involved in DNA repair. Involved in gene silencing by neighboring heterochromatin, blockage of the silencing spreading along the chromosome, and required for cell cycle progression through G2/M. The sequence is that of Enhancer of polycomb-like protein 1 (EPL1) from Candida albicans (strain SC5314 / ATCC MYA-2876) (Yeast).